A 201-amino-acid chain; its full sequence is MRLLPLLRTVLWAAFLGSPLRGGSSLRHVVYWNSSNPRLLRGDAVVELGLNDYLDIVCPHYEGPGPPEGPETFALYMVDWPGYESCQAEGPRAYKRWVCSLPFGHVQFSEKIQRFTPFSLGFEFLPGETYYYISVPTPESSGQCLRLQVSVCCKERKSESAHPVGSPGESGTSGWRGGDTPSPLCLLLLLLLLILRLLRIL.

Positions 1–25 (MRLLPLLRTVLWAAFLGSPLRGGSS) are cleaved as a signal peptide. One can recognise an Ephrin RBD domain in the interval 26–155 (LRHVVYWNSS…RLQVSVCCKE (130 aa)). A glycan (N-linked (GlcNAc...) asparagine) is linked at N33. Cystine bridges form between C58–C99 and C86–C144. S170 carries GPI-anchor amidated serine lipidation. Residues 171-201 (GTSGWRGGDTPSPLCLLLLLLLLILRLLRIL) constitute a propeptide, removed in mature form.

The protein belongs to the ephrin family. As to expression, expressed in the adult spleen, lymph node, prostate, ovary, small intestine, and colon, and in fetal heart, lung, liver and kidney. Also detected in hematopoietic cell lines.

It localises to the cell membrane. The protein localises to the secreted. Its function is as follows. Cell surface GPI-bound ligand for Eph receptors, a family of receptor tyrosine kinases which are crucial for migration, repulsion and adhesion during neuronal, vascular and epithelial development. Binds promiscuously Eph receptors residing on adjacent cells, leading to contact-dependent bidirectional signaling into neighboring cells. May play a role in the interaction between activated B-lymphocytes and dendritic cells in tonsils. This chain is Ephrin-A4 (EFNA4), found in Homo sapiens (Human).